Reading from the N-terminus, the 207-residue chain is Hemin/hemoglobin-binding protein 1 (207 aa).

The N-terminal stretch at 1 to 27 (MKKVLVFAAFIVLFSFSFLSTGLTAQA) is a signal peptide. The region spanning 29 to 148 (LKDGTYSVDY…RFDEGSAKAL (120 aa)) is the NEAT domain. Residues 151–178 (AVKSSDNNTTTPATKSDSSNKVTNPKSS) form a disordered region. The span at 154–178 (SSDNNTTTPATKSDSSNKVTNPKSS) shows a compositional bias: polar residues. Residues 174-178 (NPKSS) carry the NPKXZ sorting signal motif. Position 177 is a murein peptidoglycan amidated serine (serine 177). Positions 178 to 207 (SDSSQMFLYGIIFVATGAGLILLKRRAIFK) are cleaved as a propeptide — removed by sortase B.

Its subcellular location is the secreted. The protein resides in the cell wall. In terms of biological role, binds both host hemin and hemoglobin with affinity in the nanomolar range and presumably directs it to membrane transporters. The protein is Hemin/hemoglobin-binding protein 1 of Listeria monocytogenes serovar 1/2a (strain ATCC BAA-679 / EGD-e).